The following is a 284-amino-acid chain: Pantothenate synthetase (284 aa).

An ATP-binding site is contributed by 32 to 39; sequence MGALHEGH. The active-site Proton donor is H39. Q63 lines the (R)-pantoate pocket. Residue Q63 coordinates beta-alanine. 149 to 152 is a binding site for ATP; it reads GEKD. Q155 contributes to the (R)-pantoate binding site. Residues V178 and 186–189 contribute to the ATP site; that span reads LSSR.

Belongs to the pantothenate synthetase family. In terms of assembly, homodimer.

It localises to the cytoplasm. It carries out the reaction (R)-pantoate + beta-alanine + ATP = (R)-pantothenate + AMP + diphosphate + H(+). It participates in cofactor biosynthesis; (R)-pantothenate biosynthesis; (R)-pantothenate from (R)-pantoate and beta-alanine: step 1/1. Its function is as follows. Catalyzes the condensation of pantoate with beta-alanine in an ATP-dependent reaction via a pantoyl-adenylate intermediate. This is Pantothenate synthetase from Chelativorans sp. (strain BNC1).